We begin with the raw amino-acid sequence, 88 residues long: uncharacterized protein (88 aa).

An N-terminal signal peptide occupies residues 1–23; the sequence is MAVSGLRLTIVWGLLVLILTCQA. Positions 25–40 are enriched in basic and acidic residues; the sequence is DKPEGKPDEQPHDSGK. Residues 25–45 form a disordered region; the sequence is DKPEGKPDEQPHDSGKNSEPA.

It is found in the secreted. This is an uncharacterized protein from Bos taurus (Bovine).